The sequence spans 259 residues: Formate channel BtFdhC (259 aa).

Topologically, residues 1–26 (MAFHKPEQIAELVIEAGVQKVSQTLP) are cytoplasmic. The helical transmembrane segment at 27 to 47 (AMLILGFLGGAFISLGFLLNI) threads the bilayer. The Periplasmic portion of the chain corresponds to 48–66 (RVLGNLPERWGSLVNVLGG). The helical transmembrane segment at 67 to 97 (AVFPVGLMLVVLAGGELITGNMMSLSMALYA) threads the bilayer. At 98–108 (KKITLVSVLNN) the chain is on the cytoplasmic side. Residues 109–130 (WVWITFMNFVGAIFVAYCFGHL) traverse the membrane as a helical segment. The Periplasmic portion of the chain corresponds to 131 to 157 (GGLTEGDYLNKTVAIAEGKLHESFGRT). A helical transmembrane segment spans residues 158–176 (LILAIGCNWLVCLALWLAY). Topologically, residues 177–187 (GTSDFVGKIIG) are cytoplasmic. A helical membrane pass occupies residues 188–216 (IWIPIMAFVVIGFQQVVANMFVISAVIFA). Residues 217 to 227 (GHLTWMDLARN) are Periplasmic-facing. A helical transmembrane segment spans residues 228–250 (FVPVFIGNVIGGAGFVGFAYFAC). At 251 to 259 (YQKQHSNMK) the chain is on the cytoplasmic side.

The protein belongs to the FNT transporter (TC 1.A.16) family.

The protein resides in the cell inner membrane. It carries out the reaction formate(in) = formate(out). Its function is as follows. Acts as a formate transporter. This Bacillus thuringiensis protein is Formate channel BtFdhC.